A 60-amino-acid polypeptide reads, in one-letter code: Large ribosomal subunit protein uL30 (60 aa).

This sequence belongs to the universal ribosomal protein uL30 family. In terms of assembly, part of the 50S ribosomal subunit.

The chain is Large ribosomal subunit protein uL30 from Shewanella sp. (strain ANA-3).